A 302-amino-acid polypeptide reads, in one-letter code: Ribonuclease HII (302 aa).

Residues 53-297 (EFEIGVDEVG…VQQAIEGTLA (245 aa)) form the RNase H type-2 domain. The a divalent metal cation site is built by Asp59, Glu60, and Asp163.

It belongs to the RNase HII family. Requires Mn(2+) as cofactor. Mg(2+) is required as a cofactor.

The protein resides in the cytoplasm. It carries out the reaction Endonucleolytic cleavage to 5'-phosphomonoester.. In terms of biological role, endonuclease that specifically degrades the RNA of RNA-DNA hybrids. This chain is Ribonuclease HII, found in Psychrobacter sp. (strain PRwf-1).